The primary structure comprises 478 residues: uncharacterized protein (478 aa).

The region spanning 174–366 (RQVLAAAGVP…LIGEHIKLAI (193 aa)) is the ATP-grasp domain. An ATP-binding site is contributed by 214 to 219 (GSGSRG). Arginine 339 is an active-site residue.

This is an uncharacterized protein from Sinorhizobium fredii (strain NBRC 101917 / NGR234).